Reading from the N-terminus, the 349-residue chain is Ribonucleoside-diphosphate reductase small chain (349 aa).

Fe cation is bound by residues aspartate 99, glutamate 130, and histidine 133. Residue tyrosine 137 is part of the active site. 3 residues coordinate Fe cation: glutamate 192, glutamate 226, and histidine 229.

The protein belongs to the ribonucleoside diphosphate reductase small chain family. In terms of assembly, heterodimer of a large and a small subunit. Fe cation is required as a cofactor.

It catalyses the reaction a 2'-deoxyribonucleoside 5'-diphosphate + [thioredoxin]-disulfide + H2O = a ribonucleoside 5'-diphosphate + [thioredoxin]-dithiol. In terms of biological role, provides the precursors necessary for DNA synthesis. Catalyzes the biosynthesis of deoxyribonucleotides from the corresponding ribonucleotides. In Plasmodium falciparum (isolate Dd2), this protein is Ribonucleoside-diphosphate reductase small chain (RNR2).